The sequence spans 2206 residues: Genome polyprotein (2206 aa).

G2 is lipidated: N-myristoyl glycine; by host. The Cytoplasmic segment spans residues 2-1517 (GAQVSSQKVG…NINRAMTILQ (1516 aa)). 2 amphipathic alpha-helix regions span residues 579–599 (GVDDLITEVAQNALALSLPKP) and 579–603 (GVDDLITEVAQNALALSLPKPQSNL). Catalysis depends on for protease 2A activity residues H898 and D916. Positions 933 and 935 each coordinate Zn(2+). The active-site For protease 2A activity is C987. The Zn(2+) site is built by C993 and H995. A membrane-binding region spans residues 1125 to 1197 (GDSWLKKFTE…HQSCPSQEHQ (73 aa)). The tract at residues 1125–1263 (GDSWLKKFTE…SPGTGKSVAT (139 aa)) is oligomerization. Residues 1146 to 1150 (SNKIS) are RNA-binding. The SF3 helicase domain maps to 1229–1385 (EHTINNYIQF…SEYSRDGKLN (157 aa)). Residue 1253–1260 (GSPGTGKS) participates in ATP binding. Residues C1393, C1396, C1405, and C1410 each contribute to the Zn(2+) site. The C4-type zinc-finger motif lies at 1393-1410 (CKNCHQPANFKRCCPLVC). The tract at residues 1437–1444 (EKNRRSNI) is RNA-binding. Residues 1448–1453 (MEALFQ) are oligomerization. The stretch at 1518 to 1533 (AVTTFAAVAGVVYVMY) is an intramembrane region. The Cytoplasmic portion of the chain corresponds to 1534–2206 (KLFAGHQGAY…TLYRRWLDSF (673 aa)). Y1543 is modified (O-(5'-phospho-RNA)-tyrosine). The 179-residue stretch at 1563 to 1741 (GPGFDYAVAM…FAAALKRSYF (179 aa)) folds into the Peptidase C3 domain. Active-site for protease 3C activity residues include H1602, E1633, and C1709. The RdRp catalytic domain maps to 1972–2087 (EKLFAFDYTG…SYPHEVDASL (116 aa)). D1978 and D2073 together coordinate Mg(2+).

It belongs to the picornaviruses polyprotein family. In terms of assembly, interacts with capsid protein VP1 and capsid protein VP3 to form heterotrimeric protomers. As to quaternary structure, interacts with capsid protein VP0, and capsid protein VP3 to form heterotrimeric protomers. Interacts with human PVR. Five protomers subsequently associate to form pentamers which serve as building blocks for the capsid. Interacts with capsid protein VP2, capsid protein VP3 and capsid protein VP4 following cleavage of capsid protein VP0. Interacts with capsid protein VP1 and capsid protein VP3 in the mature capsid. In terms of assembly, interacts with capsid protein VP0 and capsid protein VP1 to form heterotrimeric protomers. Five protomers subsequently associate to form pentamers which serve as building blocks for the capsid. Interacts with capsid protein VP4 in the mature capsid. Interacts with protein 2C; this interaction may be important for virion morphogenesis. As to quaternary structure, interacts with capsid protein VP1 and capsid protein VP3. Homodimer. In terms of assembly, homohexamer; forms a hexameric ring structure with 6-fold symmetry characteristic of AAA+ ATPases. Interacts (via N-terminus) with host RTN3 (via reticulon domain); this interaction is important for viral replication. Interacts with capsid protein VP3; this interaction may be important for virion morphogenesis. As to quaternary structure, interacts with protein 3CD. Homodimer. Interacts with host GBF1. Interacts (via GOLD domain) with host ACBD3 (via GOLD domain); this interaction allows the formation of a viral protein 3A/ACBD3 heterotetramer with a 2:2 stoichiometry, which will stimulate the recruitment of host PI4KB in order to synthesize PI4P at the viral RNA replication sites. In terms of assembly, interacts with RNA-directed RNA polymerase. As to quaternary structure, interacts with protein 3AB and with RNA-directed RNA polymerase. Interacts with Viral protein genome-linked and with protein 3CD. The cofactor is Mg(2+). In terms of processing, specific enzymatic cleavages in vivo by the viral proteases yield processing intermediates and the mature proteins. Post-translationally, myristoylation is required for the formation of pentamers during virus assembly. Further assembly of 12 pentamers and a molecule of genomic RNA generates the provirion. During virion maturation, immature virions are rendered infectious following cleavage of VP0 into VP4 and VP2. This maturation seems to be an autocatalytic event triggered by the presence of RNA in the capsid and it is followed by a conformational change infectious virion. In terms of processing, myristoylation is required during RNA encapsidation and formation of the mature virus particle. Post-translationally, VPg is uridylylated by the polymerase into VPg-pUpU. This acts as a nucleotide-peptide primer for the genomic RNA replication.

It is found in the virion. The protein resides in the host cytoplasm. Its subcellular location is the host cytoplasmic vesicle membrane. It localises to the host nucleus. It carries out the reaction a ribonucleoside 5'-triphosphate + H2O = a ribonucleoside 5'-diphosphate + phosphate + H(+). It catalyses the reaction Selective cleavage of Tyr-|-Gly bond in the picornavirus polyprotein.. The enzyme catalyses RNA(n) + a ribonucleoside 5'-triphosphate = RNA(n+1) + diphosphate. The catalysed reaction is Selective cleavage of Gln-|-Gly bond in the poliovirus polyprotein. In other picornavirus reactions Glu may be substituted for Gln, and Ser or Thr for Gly.. With respect to regulation, replication or transcription is subject to high level of random mutations by the nucleotide analog ribavirin. Its function is as follows. Forms an icosahedral capsid of pseudo T=3 symmetry with capsid proteins VP2 and VP3. The capsid is 300 Angstroms in diameter, composed of 60 copies of each capsid protein and enclosing the viral positive strand RNA genome. Capsid protein VP1 mainly forms the vertices of the capsid. Capsid protein VP1 interacts with host cell receptor PVR to provide virion attachment to target host cells. This attachment induces virion internalization predominantly through clathrin- and caveolin-independent endocytosis in Hela cells and through caveolin-mediated endocytosis in brain microvascular endothelial cells. Tyrosine kinases are probably involved in the entry process. Virus binding to PVR induces increased junctional permeability and rearrangement of junctional proteins. Modulation of endothelial tight junctions, as well as cytolytic infection of endothelial cells themselves, may result in loss of endothelial integrity which may help the virus to reach the CNS. After binding to its receptor, the capsid undergoes conformational changes. Capsid protein VP1 N-terminus (that contains an amphipathic alpha-helix) and capsid protein VP4 are externalized. Together, they shape a pore in the host membrane through which viral genome is translocated to host cell cytoplasm. In terms of biological role, forms an icosahedral capsid of pseudo T=3 symmetry with capsid proteins VP2 and VP3. The capsid is 300 Angstroms in diameter, composed of 60 copies of each capsid protein and enclosing the viral positive strand RNA genome. Lies on the inner surface of the capsid shell. After binding to the host receptor, the capsid undergoes conformational changes. Capsid protein VP4 is released, Capsid protein VP1 N-terminus is externalized, and together, they shape a pore in the host membrane through which the viral genome is translocated into the host cell cytoplasm. Functionally, component of immature procapsids, which is cleaved into capsid proteins VP4 and VP2 after maturation. Allows the capsid to remain inactive before the maturation step. Its function is as follows. Cysteine protease that cleaves viral polyprotein and specific host proteins. It is responsible for the autocatalytic cleavage between the P1 and P2 regions, which is the first cleavage occurring in the polyprotein. Also cleaves the host translation initiation factor EIF4G1, in order to shut down the capped cellular mRNA translation. Inhibits the host nucleus-cytoplasm protein and RNA trafficking by cleaving host members of the nuclear pores including NUP98, NUP62 and NUP153. Counteracts stress granule formation probably by antagonizing its assembly or promoting its dissassembly. Cleaves and inhibits host IFIH1/MDA5, thereby inhibiting the type-I IFN production and the establishment of the antiviral state. Cleaves and inhibits host MAVS, thereby inhibiting the type-I IFN production and the establishment of the antiviral state. In terms of biological role, plays an essential role in the virus replication cycle by acting as a viroporin. Creates a pore in the host endoplasmic reticulum and as a consequence releases Ca2+ in the cytoplasm of infected cell. In turn, high levels of cytoplasmic calcium may trigger membrane trafficking and transport of viral ER-associated proteins to viroplasms, sites of viral genome replication. Induces and associates with structural rearrangements of intracellular membranes. Displays RNA-binding, nucleotide binding and NTPase activities. May play a role in virion morphogenesis and viral RNA encapsidation by interacting with the capsid protein VP3. Functionally, localizes the viral replication complex to the surface of membranous vesicles. Together with protein 3CD binds the Cis-Active RNA Element (CRE) which is involved in RNA synthesis initiation. Acts as a cofactor to stimulate the activity of 3D polymerase, maybe through a nucleid acid chaperone activity. Its function is as follows. Localizes the viral replication complex to the surface of membranous vesicles. It inhibits host cell endoplasmic reticulum-to-Golgi apparatus transport and causes the disassembly of the Golgi complex, possibly through GBF1 interaction. This would result in depletion of MHC, trail receptors and IFN receptors at the host cell surface. Plays an essential role in viral RNA replication by recruiting ACBD3 and PI4KB at the viral replication sites, thereby allowing the formation of the rearranged membranous structures where viral replication takes place. In terms of biological role, acts as a primer for viral RNA replication and remains covalently bound to viral genomic RNA. VPg is uridylylated prior to priming replication into VPg-pUpU. The oriI viral genomic sequence may act as a template for this. The VPg-pUpU is then used as primer on the genomic RNA poly(A) by the RNA-dependent RNA polymerase to replicate the viral genome. During genome replication, the VPg-RNA linkage is removed by the host TDP2, thereby accelerating replication. During the late stage of the replication cycle, host TDP2 is excluded from sites of viral RNA synthesis and encapsidation, allowing for the generation of progeny virions. Involved in the viral replication complex and viral polypeptide maturation. It exhibits protease activity with a specificity and catalytic efficiency that is different from protease 3C. Protein 3CD lacks polymerase activity. Protein 3CD binds to the 5'UTR of the viral genome. Functionally, major viral protease that mediates proteolytic processing of the polyprotein. Cleaves host EIF5B, contributing to host translation shutoff. Also cleaves host PABPC1, contributing to host translation shutoff. Cleaves host RIGI and thus contributes to the inhibition of type I interferon production. Cleaves host NLRP1, triggers host N-glycine-mediated degradation of the autoinhibitory NLRP1 N-terminal fragment. Inhibits the integrated stress response (ISR) in the infected cell by cleaving host G3BP1. Stress granule formation is thus inhibited, which allows protein synthesis and viral replication. Its function is as follows. Replicates the viral genomic RNA on the surface of intracellular membranes. May form linear arrays of subunits that propagate along a strong head-to-tail interaction called interface-I. Covalently attaches UMP to a tyrosine of VPg, which is used to prime RNA synthesis. The positive stranded RNA genome is first replicated at virus induced membranous vesicles, creating a dsRNA genomic replication form. This dsRNA is then used as template to synthesize positive stranded RNA genomes. ss(+)RNA genomes are either translated, replicated or encapsidated. This Poliovirus type 3 (strain 23127) protein is Genome polyprotein.